A 129-amino-acid polypeptide reads, in one-letter code: Small ribosomal subunit protein uS8 (129 aa).

This sequence belongs to the universal ribosomal protein uS8 family. Part of the 30S ribosomal subunit. Contacts proteins S5 and S12.

In terms of biological role, one of the primary rRNA binding proteins, it binds directly to 16S rRNA central domain where it helps coordinate assembly of the platform of the 30S subunit. The sequence is that of Small ribosomal subunit protein uS8 from Spiroplasma kunkelii.